The chain runs to 397 residues: ATP-dependent RNA helicase RhlB (397 aa).

The Q motif motif lies at 8 to 36; that stretch reads TRFHDFNLAPELMHAIQDLGFPYCTPIQA. The Helicase ATP-binding domain occupies 39-219; the sequence is LGFTLKGKDA…KQWTTDPSIV (181 aa). 52-59 lines the ATP pocket; the sequence is AQTGTGKT. The DEAD box signature appears at 165–168; it reads DEAD. In terms of domain architecture, Helicase C-terminal spans 242–392; sequence DKYKLLYNLV…TPPTHLLRAV (151 aa).

Belongs to the DEAD box helicase family. RhlB subfamily. As to quaternary structure, component of the RNA degradosome, which is a multiprotein complex involved in RNA processing and mRNA degradation.

Its subcellular location is the cytoplasm. The catalysed reaction is ATP + H2O = ADP + phosphate + H(+). In terms of biological role, DEAD-box RNA helicase involved in RNA degradation. Has RNA-dependent ATPase activity and unwinds double-stranded RNA. The protein is ATP-dependent RNA helicase RhlB of Pseudomonas syringae pv. tomato (strain ATCC BAA-871 / DC3000).